The chain runs to 489 residues: UDP-N-acetylmuramoyl-L-alanyl-D-glutamate--2,6-diaminopimelate ligase (489 aa).

Serine 30 serves as a coordination point for UDP-N-acetyl-alpha-D-muramoyl-L-alanyl-D-glutamate. 110–116 serves as a coordination point for ATP; the sequence is GTNGKTT. Residues 152-153, serine 179, and arginine 187 each bind UDP-N-acetyl-alpha-D-muramoyl-L-alanyl-D-glutamate; that span reads TT. Lysine 219 carries the post-translational modification N6-carboxylysine. Meso-2,6-diaminopimelate contacts are provided by residues arginine 381, 405-408, glycine 458, and glutamate 462; that span reads DNPR. Residues 405–408 carry the Meso-diaminopimelate recognition motif motif; the sequence is DNPR.

The protein belongs to the MurCDEF family. MurE subfamily. Requires Mg(2+) as cofactor. Post-translationally, carboxylation is probably crucial for Mg(2+) binding and, consequently, for the gamma-phosphate positioning of ATP.

It localises to the cytoplasm. The catalysed reaction is UDP-N-acetyl-alpha-D-muramoyl-L-alanyl-D-glutamate + meso-2,6-diaminopimelate + ATP = UDP-N-acetyl-alpha-D-muramoyl-L-alanyl-gamma-D-glutamyl-meso-2,6-diaminopimelate + ADP + phosphate + H(+). Its pathway is cell wall biogenesis; peptidoglycan biosynthesis. Functionally, catalyzes the addition of meso-diaminopimelic acid to the nucleotide precursor UDP-N-acetylmuramoyl-L-alanyl-D-glutamate (UMAG) in the biosynthesis of bacterial cell-wall peptidoglycan. The protein is UDP-N-acetylmuramoyl-L-alanyl-D-glutamate--2,6-diaminopimelate ligase of Syntrophomonas wolfei subsp. wolfei (strain DSM 2245B / Goettingen).